The sequence spans 74 residues: U-actitoxin-Bgr3a (74 aa).

A signal peptide spans 1–21 (MSAQRFLFLLVVTSLIAASLA). Positions 22–29 (APKDVQLT) are excised as a propeptide. 3 disulfides stabilise this stretch: cysteine 35–cysteine 68, cysteine 37–cysteine 61, and cysteine 51–cysteine 69.

This sequence belongs to the sea anemone type 3 (BDS) potassium channel toxin family.

Its subcellular location is the secreted. The protein resides in the nematocyst. Functionally, potently and selectively inhibits voltage-gated potassium channels Kv11/KCNH/ERG. Acts as a gating-modifier toxin that shifts the voltage-dependence of ERG activation in the positive direction and suppresses its current amplitudes elicited by strong depolarizing pulses that maximally activate the channels. The chain is U-actitoxin-Bgr3a from Bunodosoma granuliferum (Red warty sea anemone).